Consider the following 492-residue polypeptide: Probable glycine dehydrogenase (decarboxylating) subunit 2 (492 aa).

At Lys-274 the chain carries N6-(pyridoxal phosphate)lysine.

The protein belongs to the GcvP family. C-terminal subunit subfamily. In terms of assembly, the glycine cleavage system is composed of four proteins: P, T, L and H. In this organism, the P 'protein' is a heterodimer of two subunits. Pyridoxal 5'-phosphate serves as cofactor.

The catalysed reaction is N(6)-[(R)-lipoyl]-L-lysyl-[glycine-cleavage complex H protein] + glycine + H(+) = N(6)-[(R)-S(8)-aminomethyldihydrolipoyl]-L-lysyl-[glycine-cleavage complex H protein] + CO2. Functionally, the glycine cleavage system catalyzes the degradation of glycine. The P protein binds the alpha-amino group of glycine through its pyridoxal phosphate cofactor; CO(2) is released and the remaining methylamine moiety is then transferred to the lipoamide cofactor of the H protein. This chain is Probable glycine dehydrogenase (decarboxylating) subunit 2, found in Exiguobacterium sibiricum (strain DSM 17290 / CCUG 55495 / CIP 109462 / JCM 13490 / 255-15).